Reading from the N-terminus, the 429-residue chain is Histidinol dehydrogenase (429 aa).

3 residues coordinate NAD(+): Tyr130, Gln191, and Asn214. 3 residues coordinate substrate: Ser237, Gln259, and His262. Zn(2+)-binding residues include Gln259 and His262. Residues Glu327 and His328 each act as proton acceptor in the active site. Substrate contacts are provided by His328, Asp361, Glu415, and His420. Asp361 lines the Zn(2+) pocket. His420 is a binding site for Zn(2+).

The protein belongs to the histidinol dehydrogenase family. The cofactor is Zn(2+).

It carries out the reaction L-histidinol + 2 NAD(+) + H2O = L-histidine + 2 NADH + 3 H(+). It functions in the pathway amino-acid biosynthesis; L-histidine biosynthesis; L-histidine from 5-phospho-alpha-D-ribose 1-diphosphate: step 9/9. Its function is as follows. Catalyzes the sequential NAD-dependent oxidations of L-histidinol to L-histidinaldehyde and then to L-histidine. This Geobacter sulfurreducens (strain ATCC 51573 / DSM 12127 / PCA) protein is Histidinol dehydrogenase.